Here is a 428-residue protein sequence, read N- to C-terminus: MGLQAPRGTRDILPAERVYWQYLETIARQILDRAAYREICTPIFEQTPLFERGIGEATDIVSKEMYTFRDRAQRSLTLRPEGTAGVVRAYIEHGLHSQGGVQRLWYLGPMFRYERPQSGRYRQFHQLGVEVLGSADPRADAEVIAVALDILQALGLKQLTLMLNSVGDREDRSAYRQALVDYLTPYKADLDPDSQERLHRNPLRILDSKDPRTQAIVKEAPRLLDYLSARSRAHFEQVQSLLQALGIAYQINPALVRGLDYYTHTAFEFQDMSLGNEGTVCGGGRYDHLVEELGGPPTPAIGWAMGLERLILLLRDRPLPARNQPYLYMVTRGAAAERQGLILAQQLRHQGYTVDVDLSGSAFGKQVKRADRVGATVCLVIGESEATDGTVQVKWLASGEQVLVPQQELLSENWRSRFLTPHDGLLSH.

Belongs to the class-II aminoacyl-tRNA synthetase family. In terms of assembly, homodimer.

It is found in the cytoplasm. It carries out the reaction tRNA(His) + L-histidine + ATP = L-histidyl-tRNA(His) + AMP + diphosphate + H(+). The polypeptide is Histidine--tRNA ligase (Thermosynechococcus vestitus (strain NIES-2133 / IAM M-273 / BP-1)).